Here is a 564-residue protein sequence, read N- to C-terminus: Forkhead transcription factor HCM1 (564 aa).

Positions 33–80 (DEKEMITPPSSTVRKTMKEVNKRPSHPLSPDHSSPIAPSKAKRQRSDT) are disordered. The segment covering 58-67 (HPLSPDHSSP) has biased composition (low complexity). Residues 108–199 (KKPPYSYATL…KFFKGENRGY (92 aa)) constitute a DNA-binding region (fork-head). Positions 224–241 (QVESGEGNDDLPDEEERE) are enriched in acidic residues. The segment at 224-246 (QVESGEGNDDLPDEEEREEAGKF) is disordered. T342 bears the Phosphothreonine mark. The segment at 401 to 448 (SKPQSQQSYSNSQLPPPPSSHGSDLLKTPKMRHSDGLEKTPSRLISTP) is disordered. Polar residues predominate over residues 402 to 413 (KPQSQQSYSNSQ). A compositionally biased stretch (basic and acidic residues) spans 432–441 (RHSDGLEKTP). S496 bears the Phosphoserine mark. The interval 536–564 (SDGNNTTDSNQKHHPYHNHPSNDSGNEKN) is disordered. Residues 554–564 (HPSNDSGNEKN) are compositionally biased toward polar residues.

In terms of processing, phosphorylated by CDK1.

It localises to the cytoplasm. Its subcellular location is the nucleus. Transcription factor regulating the cell cycle specific transcription of a spindle pole body (SPB) calmodulin binding protein SPC110. Required for full induction of SPC110 transcription in late G1. Binds to DNA consensus sequence 5'-[AT]AA[TC]AAACAA[AT]-3'. Dosage dependent suppressor of calmodulin mutants which have specific defects in SPB assembly. This is Forkhead transcription factor HCM1 (HCM1) from Saccharomyces cerevisiae (strain ATCC 204508 / S288c) (Baker's yeast).